Reading from the N-terminus, the 548-residue chain is Acetylcholine receptor subunit alpha-type des-2 (548 aa).

An N-terminal signal peptide occupies residues Met-1 to Ala-19. The Extracellular portion of the chain corresponds to Thr-21–Leu-239. Asn-52, Asn-96, and Asn-224 each carry an N-linked (GlcNAc...) asparagine glycan. The next 3 membrane-spanning stretches (helical) occupy residues Phe-240–Phe-260, Val-274–Gln-294, and Phe-301–Val-321. Residues Leu-422–Asp-460 are disordered. A compositionally biased stretch (pro residues) spans Ser-439–Pro-455. The chain crosses the membrane as a helical span at residues Phe-517–Ile-537. Residues His-538–Gly-548 are Cytoplasmic-facing.

Belongs to the ligand-gated ion channel (TC 1.A.9) family. Acetylcholine receptor (TC 1.A.9.1) subfamily. The functional receptor is a heteromer of deg-3 and des-2. Interacts with ric-3; which is required for proper receptor folding.

It localises to the cell membrane. Functionally, subunit of the non-synaptic neuronal acetylcholine receptor (AChR), which may play a role in chemotaxis towards choline. After binding choline or acetylcholine, the AChR responds by an extensive change in conformation that affects all subunits and leads to opening of an ion-conducting channel across the plasma membrane. The protein is Acetylcholine receptor subunit alpha-type des-2 (des-2) of Caenorhabditis elegans.